Reading from the N-terminus, the 1056-residue chain is Carbamoyl phosphate synthase large chain (1056 aa).

The carboxyphosphate synthetic domain stretch occupies residues 1–398; it reads MPRDPSIKKV…AFLKALRSLD (398 aa). The ATP site is built by R127, R167, G173, G174, E206, V208, E213, G239, V240, H241, Q282, and E295. The region spanning 131-324 is the ATP-grasp 1 domain; it reads RDLMNRIGEP…IARVASKIAI (194 aa). Residues Q282, E295, and N297 each contribute to the Mg(2+) site. Residues Q282, E295, and N297 each coordinate Mn(2+). The interval 399 to 532 is oligomerization domain; that stretch reads TDVEHHTVLS…STYGDKVCEV (134 aa). The segment at 533–921 is carbamoyl phosphate synthetic domain; sequence THSDRKKVMI…YKASIAAHNR (389 aa). In terms of domain architecture, ATP-grasp 2 spans 663-854; that stretch reads SVLLDSLSIP…LAKIAARVMM (192 aa). Residues R699, R738, L740, E745, G770, V771, H772, S773, Q813, and E825 each contribute to the ATP site. Q813, E825, and N827 together coordinate Mg(2+). Residues Q813, E825, and N827 each contribute to the Mn(2+) site. Residues 920–1056 enclose the MGS-like domain; that stretch reads NRLPKSGNVF…IEPLQHYIGR (137 aa). The interval 922-1056 is allosteric domain; that stretch reads LPKSGNVFIS…IEPLQHYIGR (135 aa).

The protein belongs to the CarB family. As to quaternary structure, composed of two chains; the small (or glutamine) chain promotes the hydrolysis of glutamine to ammonia, which is used by the large (or ammonia) chain to synthesize carbamoyl phosphate. Tetramer of heterodimers (alpha,beta)4. Mg(2+) is required as a cofactor. It depends on Mn(2+) as a cofactor.

The enzyme catalyses hydrogencarbonate + L-glutamine + 2 ATP + H2O = carbamoyl phosphate + L-glutamate + 2 ADP + phosphate + 2 H(+). It catalyses the reaction hydrogencarbonate + NH4(+) + 2 ATP = carbamoyl phosphate + 2 ADP + phosphate + 2 H(+). The protein operates within amino-acid biosynthesis; L-arginine biosynthesis; carbamoyl phosphate from bicarbonate: step 1/1. It functions in the pathway pyrimidine metabolism; UMP biosynthesis via de novo pathway; (S)-dihydroorotate from bicarbonate: step 1/3. In terms of biological role, large subunit of the glutamine-dependent carbamoyl phosphate synthetase (CPSase). CPSase catalyzes the formation of carbamoyl phosphate from the ammonia moiety of glutamine, carbonate, and phosphate donated by ATP, constituting the first step of 2 biosynthetic pathways, one leading to arginine and/or urea and the other to pyrimidine nucleotides. The large subunit (synthetase) binds the substrates ammonia (free or transferred from glutamine from the small subunit), hydrogencarbonate and ATP and carries out an ATP-coupled ligase reaction, activating hydrogencarbonate by forming carboxy phosphate which reacts with ammonia to form carbamoyl phosphate. This chain is Carbamoyl phosphate synthase large chain, found in Methanospirillum hungatei JF-1 (strain ATCC 27890 / DSM 864 / NBRC 100397 / JF-1).